Consider the following 273-residue polypeptide: Putative peptidyl-prolyl cis-trans isomerase Cbf2 (273 aa).

Residues 1–21 (MKKFSLVAATLIAGVVLNVNA) form the signal peptide. The 98-residue stretch at 131 to 228 (PARVQAKHIL…FGYHVILKEN (98 aa)) folds into the PpiC domain.

It catalyses the reaction [protein]-peptidylproline (omega=180) = [protein]-peptidylproline (omega=0). In Campylobacter jejuni subsp. jejuni serotype O:2 (strain ATCC 700819 / NCTC 11168), this protein is Putative peptidyl-prolyl cis-trans isomerase Cbf2 (cbf2).